The sequence spans 750 residues: Photosystem I P700 chlorophyll a apoprotein A1 (750 aa).

The next 8 helical transmembrane spans lie at 70–93, 156–179, 195–219, 291–309, 346–369, 385–411, 433–455, and 531–549; these read VFSAHFGQLSIIFLWLSGMYFHGA, LYCTAIGALVFAALMLFAGWFHYH, LNHHLAGLLGLGSLSWAGHQVHVSL, IAHHHLAIAILFLIAGHMY, WHAQLSLNLAMLGSLTIVVAHHMY, LSLFTHHMWIGGFLIVGAAAHAAIFMV, AIISHLNWVCIFLGFHSFGLYIH, and FLVHHIHAFTIHVTVLILL. [4Fe-4S] cluster contacts are provided by C573 and C582. The next 2 helical transmembrane spans lie at 589-610 and 664-686; these read HVFLGLFWMYNAISVVIFHFSW and LSAYGLFFLGAHFVWAFSLMFLF. A chlorophyll a'-binding site is contributed by H675. The chlorophyll a site is built by M683 and Y691. W692 lines the phylloquinone pocket. Residues 724–744 traverse the membrane as a helical segment; sequence TVGVTHYLLGGIATTWAFFLA.

Belongs to the PsaA/PsaB family. In terms of assembly, the PsaA/B heterodimer binds the P700 chlorophyll special pair and subsequent electron acceptors. PSI consists of a core antenna complex that captures photons, and an electron transfer chain that converts photonic excitation into a charge separation. The eukaryotic PSI reaction center is composed of at least 11 subunits. Requires P700 is a chlorophyll a/chlorophyll a' dimer, A0 is one or more chlorophyll a, A1 is one or both phylloquinones and FX is a shared 4Fe-4S iron-sulfur center. as cofactor.

It localises to the plastid. Its subcellular location is the chloroplast thylakoid membrane. The enzyme catalyses reduced [plastocyanin] + hnu + oxidized [2Fe-2S]-[ferredoxin] = oxidized [plastocyanin] + reduced [2Fe-2S]-[ferredoxin]. Its function is as follows. PsaA and PsaB bind P700, the primary electron donor of photosystem I (PSI), as well as the electron acceptors A0, A1 and FX. PSI is a plastocyanin-ferredoxin oxidoreductase, converting photonic excitation into a charge separation, which transfers an electron from the donor P700 chlorophyll pair to the spectroscopically characterized acceptors A0, A1, FX, FA and FB in turn. Oxidized P700 is reduced on the lumenal side of the thylakoid membrane by plastocyanin. This chain is Photosystem I P700 chlorophyll a apoprotein A1, found in Oenothera elata subsp. hookeri (Hooker's evening primrose).